A 127-amino-acid polypeptide reads, in one-letter code: uncharacterized protein (127 aa).

A signal peptide spans 1–26 (MKAIYALLAVVALALVAVSLFSQSDS).

This is an uncharacterized protein from Archaeoglobus fulgidus (strain ATCC 49558 / DSM 4304 / JCM 9628 / NBRC 100126 / VC-16).